The primary structure comprises 316 residues: D-alanine--D-alanine ligase (316 aa).

The 203-residue stretch at 108-310 folds into the ATP-grasp domain; it reads ERYEELSVVK…FDELVDLIIK (203 aa). 138-193 lines the ATP pocket; sequence EEKIGLPCVVKPRKEGSSIGTHICFSKEELLDALKNEFKNYDEMIVQEYIKGKEIT. 3 residues coordinate Mg(2+): Asp265, Glu277, and Asn279.

The protein belongs to the D-alanine--D-alanine ligase family. The cofactor is Mg(2+). Mn(2+) serves as cofactor.

The protein resides in the cytoplasm. It carries out the reaction 2 D-alanine + ATP = D-alanyl-D-alanine + ADP + phosphate + H(+). It functions in the pathway cell wall biogenesis; peptidoglycan biosynthesis. Cell wall formation. In Fervidobacterium nodosum (strain ATCC 35602 / DSM 5306 / Rt17-B1), this protein is D-alanine--D-alanine ligase.